Here is a 220-residue protein sequence, read N- to C-terminus: Deoxyribose-phosphate aldolase (220 aa).

The active-site Proton donor/acceptor is the aspartate 89. The active-site Schiff-base intermediate with acetaldehyde is lysine 151. Lysine 180 functions as the Proton donor/acceptor in the catalytic mechanism.

Belongs to the DeoC/FbaB aldolase family. DeoC type 1 subfamily.

Its subcellular location is the cytoplasm. It carries out the reaction 2-deoxy-D-ribose 5-phosphate = D-glyceraldehyde 3-phosphate + acetaldehyde. It functions in the pathway carbohydrate degradation; 2-deoxy-D-ribose 1-phosphate degradation; D-glyceraldehyde 3-phosphate and acetaldehyde from 2-deoxy-alpha-D-ribose 1-phosphate: step 2/2. Catalyzes a reversible aldol reaction between acetaldehyde and D-glyceraldehyde 3-phosphate to generate 2-deoxy-D-ribose 5-phosphate. The polypeptide is Deoxyribose-phosphate aldolase (Staphylococcus carnosus (strain TM300)).